Here is a 459-residue protein sequence, read N- to C-terminus: Putrescine aminotransferase (459 aa).

Pyridoxal 5'-phosphate is bound by residues 150–151 and Q274; that span reads GT. N6-(pyridoxal phosphate)lysine is present on K300. T332 lines the pyridoxal 5'-phosphate pocket.

Belongs to the class-III pyridoxal-phosphate-dependent aminotransferase family. Putrescine aminotransferase subfamily. Pyridoxal 5'-phosphate serves as cofactor.

The enzyme catalyses an alkane-alpha,omega-diamine + 2-oxoglutarate = an omega-aminoaldehyde + L-glutamate. The catalysed reaction is putrescine + 2-oxoglutarate = 1-pyrroline + L-glutamate + H2O. It carries out the reaction cadaverine + 2-oxoglutarate = 5-aminopentanal + L-glutamate. It participates in amine and polyamine degradation; putrescine degradation; 4-aminobutanal from putrescine (transaminase route): step 1/1. In terms of biological role, catalyzes the aminotransferase reaction from putrescine to 2-oxoglutarate, leading to glutamate and 4-aminobutanal, which spontaneously cyclizes to form 1-pyrroline. This is the first step in one of two pathways for putrescine degradation, where putrescine is converted into 4-aminobutanoate (gamma-aminobutyrate or GABA) via 4-aminobutanal. Also functions as a cadaverine transaminase in a a L-lysine degradation pathway to succinate that proceeds via cadaverine, glutarate and L-2-hydroxyglutarate. In Klebsiella pneumoniae subsp. pneumoniae (strain ATCC 700721 / MGH 78578), this protein is Putrescine aminotransferase.